The sequence spans 890 residues: Kinesin-like protein KIF20A (890 aa).

Ser-2 carries the N-acetylserine modification. Phosphoserine is present on residues Ser-7, Ser-14, and Ser-21. A Kinesin motor domain is found at 64–507; it reads KVKVYLRVRP…AKFSAIASQL (444 aa). An ATP-binding site is contributed by 160 to 167; that stretch reads GVTNSGKT. Ser-528 is subject to Phosphoserine; by PLK1. Phosphoserine occurs at positions 532, 662, 668, 685, and 825. Positions 611–762 form a coiled coil; that stretch reads LDTQKELLEE…ESLQSAERAC (152 aa). The segment at 763 to 890 is globular; it reads CHSTGAGKLR…LKSGPFGKKY (128 aa). Residues 832-865 form a disordered region; that stretch reads TNQENQQPNQQPPGKKPFLRNLLPRTPTCQSSTD. Thr-857 bears the Phosphothreonine mark. A phosphoserine mark is found at Ser-867, Ser-878, and Ser-883.

This sequence belongs to the TRAFAC class myosin-kinesin ATPase superfamily. Kinesin family. Phosphorylated by PLK1 at Ser-528 during mitosis, creating a docking site for PLK1 and recruiting PLK1 at central spindle.

The protein resides in the golgi apparatus. It is found in the cytoplasm. Its subcellular location is the cytoskeleton. The protein localises to the spindle. In terms of biological role, mitotic kinesin required for chromosome passenger complex (CPC)-mediated cytokinesis. Following phosphorylation by PLK1, involved in recruitment of PLK1 to the central spindle. Interacts with guanosine triphosphate (GTP)-bound forms of RAB6A and RAB6B. May act as a motor required for the retrograde RAB6 regulated transport of Golgi membranes and associated vesicles along microtubules. Has a microtubule plus end-directed motility. This chain is Kinesin-like protein KIF20A (KIF20A), found in Homo sapiens (Human).